The chain runs to 517 residues: UPF0522 protein B (517 aa).

A signal peptide spans 1 to 19; the sequence is MNKTIILLLISIIFEIVIS. N-linked (GlcNAc...) asparagine glycosylation is found at Asn-148, Asn-245, Asn-333, Asn-345, Asn-370, Asn-423, Asn-432, and Asn-495.

This sequence belongs to the UPF0522 family.

It is found in the secreted. This chain is UPF0522 protein B, found in Dictyostelium discoideum (Social amoeba).